The chain runs to 287 residues: NAD-dependent protein deacylase sir-2.3 (287 aa).

The 278-residue stretch at 10–287 (TELCENSLKK…YRISDVLKEM (278 aa)) folds into the Deacetylase sirtuin-type domain. Residues 35-55 (GAGI…VGLY) and 116-119 (QNVD) contribute to the NAD(+) site. H134 serves as the catalytic Proton acceptor. Positions 142, 145, 196, and 199 each coordinate Zn(2+). Residues 236–238 (GTS), 262–264 (NIG), and I280 contribute to the NAD(+) site.

Belongs to the sirtuin family. Class II subfamily. In terms of assembly, interacts with pyc-1, pcca-1 and mccc-1. Zn(2+) is required as a cofactor. In terms of tissue distribution, ubiquitously expressed with high expression in the pharynx, body wall muscles and gonad. Strong expression in a subset of non-neuronal cells in the head.

Its subcellular location is the mitochondrion matrix. It localises to the mitochondrion. The enzyme catalyses N(6)-acetyl-L-lysyl-[protein] + NAD(+) + H2O = 2''-O-acetyl-ADP-D-ribose + nicotinamide + L-lysyl-[protein]. Its function is as follows. NAD-dependent protein deacylase. Catalyzes the NAD-dependent hydrolysis of acyl groups from lysine residues. Plays a role in oxidative stress resistance. Might promote neuronal cell death under ischemic conditions and cell death in touch neurons induced by mec-4 channel hyperactivation, possibly downstream of the insulin-like receptor daf-2. Might attenuate the reactive oxygen species (ROS) scavenging system, that eliminates ROS in ischemic conditions, under dietary deprivation and when glycolysis is blocked. The polypeptide is NAD-dependent protein deacylase sir-2.3 (sir-2.3) (Caenorhabditis elegans).